A 450-amino-acid chain; its full sequence is MKRRYFGTDGIRGQSNIFPMTPDLAMRVGIAVGTIFRNGAHRHRVVIGKDTRLSGYMLENAMVAGFTAAGLDVFLLGPIPTPGVAMLTRSLRADIGVMISASHNAFRDNGIKLFGPDGYKLSDDIEQKIEDLLEQDMSGQLAKPEDIGRAKRVDGDIYRYIEQAKRTLPRDVTLKGLRIAIDCANGAAYKVAPSALWELGAEVVTIGTEPNGVNINLECGSTHPAALQKKVHEVRADIGIALDGDADRVLIVDEEGAVIDGDQLMAVIADSWAADGMLKGGGIAATVMSNLGLERYLQARRLKLHRTKVGDRYVVEQMRQDGLNVGGEQSGHIVLSDFGTTGDGLVAALQILAVVKRQGKTVSEICRRFEPVPQVLKNVRVSAGKPLEDAAVQQAIAEAEAQLAKNGRLLIRPSGTEPLIRVMAEGDDRGQVERIVDELVNVIGGVRNAA.

S102 (phosphoserine intermediate) is an active-site residue. Mg(2+) is bound by residues S102, D243, D245, and D247. The residue at position 102 (S102) is a Phosphoserine.

This sequence belongs to the phosphohexose mutase family. Mg(2+) serves as cofactor. Post-translationally, activated by phosphorylation.

It catalyses the reaction alpha-D-glucosamine 1-phosphate = D-glucosamine 6-phosphate. Catalyzes the conversion of glucosamine-6-phosphate to glucosamine-1-phosphate. The sequence is that of Phosphoglucosamine mutase from Rhizobium meliloti (strain 1021) (Ensifer meliloti).